The sequence spans 949 residues: Coiled-coil domain-containing protein 66 (949 aa).

Residues Thr115 and Thr121 each carry the phosphothreonine modification. The residue at position 369 (Ser369) is a Phosphoserine. A coiled-coil region spans residues 474–558 (QVEEKCRKKQ…EQRIRELAQK (85 aa)). The mediates localization to cilia, centrosomes and spindle microtubules and the interaction with PCM1, CEP290, CEP104 and CSPP1 stretch occupies residues 570 to 949 (GVDTIQIEYN…NQEENFGSSF (380 aa)). Ser606 bears the Phosphoserine mark. Disordered regions lie at residues 691-714 (QTKH…KRYI) and 789-809 (SFSK…RTQQ).

As to quaternary structure, homodimer; disulfide-linked. Interacts with CEP290. Interacts with PCM1. Interacts with ARMC9, TOGARAM1, CSPP1 and CEP104. Interacts with CDK5RAP2, CEP152, CEP192, TBG1 and PRC1.

It is found in the cytoplasm. The protein resides in the cytoskeleton. It localises to the microtubule organizing center. The protein localises to the centrosome. Its subcellular location is the centriolar satellite. It is found in the cell projection. The protein resides in the cilium. It localises to the cilium basal body. The protein localises to the cilium axoneme. Its subcellular location is the photoreceptor inner segment. It is found in the photoreceptor outer segment. Its function is as follows. Microtubule-binding protein required for ciliogenesis. May function in ciliogenesis by mediating the transport of proteins like BBS4 to the cilium, but also through the organization of the centriolar satellites. Required for the assembly of signaling-competent cilia with proper structure and length. Mediates this function in part by regulating transition zone assembly and basal body recruitment of the IFT-B complex. Cooperates with the ciliopathy proteins CSPP1 and CEP104 during cilium length regulation. Plays two important roles during cell division. First, is required for mitotic progression via regulation of spindle assembly, organization and orientation, levels of spindle microtubules (MTs), kinetochore-fiber integrity, and chromosome alignment. Second, functions during cytokinesis in part by regulating assembly and organization of central spindle and midbody MTs Plays a role in retina morphogenesis and/or homeostasis. This Pongo abelii (Sumatran orangutan) protein is Coiled-coil domain-containing protein 66.